A 242-amino-acid chain; its full sequence is Protein ABHD14A (242 aa).

Residues 6 to 26 (AALLGLGLLLMFLLYMGLPGP) traverse the membrane as a helical; Signal-anchor for type II membrane protein segment. N-linked (GlcNAc...) asparagine glycosylation is present at N38. Residues S142, D193, and H220 each act as charge relay system in the active site.

This sequence belongs to the AB hydrolase superfamily. ABHD14 family.

The protein resides in the cytoplasm. It localises to the membrane. In terms of biological role, possible role in granule neuron development. This chain is Protein ABHD14A, found in Rattus norvegicus (Rat).